We begin with the raw amino-acid sequence, 131 residues long: MEPSACEDLKAFERRLTEVVSSYRPSTFRWRKLLAVVLSAMSMCTAISAWYWLRDPRTTVVPLTESLWIHPVFTVATLTLVVLFILGIQKLVIAPQIITSRTRMVLGDFNMSCDDTGKLILKPRQSNNNST.

Transmembrane regions (helical) follow at residues 33–53 (LLAV…WYWL) and 68–88 (WIHP…ILGI).

Belongs to the CNEP1R1 family.

It is found in the nucleus membrane. The protein localises to the cytoplasm. In terms of biological role, may form with the serine/threonine protein phosphatase l(1)G0269 an active complex dephosphorylating and activating lipin-like phosphatases. Lipins are phosphatidate phosphatases that catalyze the conversion of phosphatidic acid to diacylglycerol and control the metabolism of fatty acids at different levels. This chain is Nuclear envelope phosphatase-regulatory subunit 1 homolog, found in Drosophila melanogaster (Fruit fly).